The following is a 275-amino-acid chain: tRNA pseudouridine synthase A (275 aa).

Residue D55 is the Nucleophile of the active site. Y111 is a binding site for substrate.

It belongs to the tRNA pseudouridine synthase TruA family.

It carries out the reaction uridine(38/39/40) in tRNA = pseudouridine(38/39/40) in tRNA. Functionally, formation of pseudouridine at positions 38, 39 and 40 in the anticodon stem and loop of transfer RNAs. In Methanococcoides burtonii (strain DSM 6242 / NBRC 107633 / OCM 468 / ACE-M), this protein is tRNA pseudouridine synthase A.